A 494-amino-acid chain; its full sequence is U3 small nucleolar RNA-associated protein 15 (494 aa).

WD repeat units lie at residues Lys-37–Thr-76, Arg-79–Ala-118, Ala-121–Asp-161, Gly-164–Met-202, Ser-205–Thr-243, Asn-248–Gly-287, and Lys-289–Ser-328.

In terms of assembly, component of the ribosomal small subunit (SSU) processome.

It is found in the nucleus. It localises to the nucleolus. Its function is as follows. Involved in nucleolar processing of pre-18S ribosomal RNA. Required for optimal pre-ribosomal RNA transcription by RNA polymerase I together with a subset of U3 proteins required for transcription (t-UTPs). The protein is U3 small nucleolar RNA-associated protein 15 (utp15) of Schizosaccharomyces pombe (strain 972 / ATCC 24843) (Fission yeast).